Here is a 316-residue protein sequence, read N- to C-terminus: Thioredoxin reductase (316 aa).

36 to 43 lines the FAD pocket; the sequence is ERGIPGGQ. C135 and C138 are disulfide-bonded. 278 to 287 contacts FAD; it reads DIREKSLRQI.

This sequence belongs to the class-II pyridine nucleotide-disulfide oxidoreductase family. As to quaternary structure, homodimer. FAD serves as cofactor.

Its subcellular location is the cytoplasm. It carries out the reaction [thioredoxin]-dithiol + NADP(+) = [thioredoxin]-disulfide + NADPH + H(+). The chain is Thioredoxin reductase (trxB) from Bacillus subtilis (strain 168).